We begin with the raw amino-acid sequence, 182 residues long: MENSRFLSCKYRSSFGSSNARRIRAKCEIPAVVYGQGNDVLHLKIKSSEFNKKFAKFTDNTVLILDDGKVERCVFVKDVAENIASKLIYHIDFYEVDKRVELEKYIPIKLVGASIGVKEGGILTVLKEQVKVRSLPLDLPEFIELDLTPVNKGDSVLLKDLVLPSNVKLAESDDNLEVVIIK.

Belongs to the bacterial ribosomal protein bL25 family. CTC subfamily. Part of the 50S ribosomal subunit; part of the 5S rRNA/L5/L18/L25 subcomplex. Contacts the 5S rRNA. Binds to the 5S rRNA independently of L5 and L18.

This is one of the proteins that binds to the 5S RNA in the ribosome where it forms part of the central protuberance. This Borreliella afzelii (strain PKo) (Borrelia afzelii) protein is Large ribosomal subunit protein bL25.